The primary structure comprises 646 residues: Cytochrome b translation regulator cbp8 (646 aa).

Component of a complex, at least composed of cbp7 and cbp8.

It localises to the mitochondrion. In terms of biological role, translation factor for cob1/cytochrome b; plays a role in cob1 mRNA stabilization and required for correct folding of the protein. The chain is Cytochrome b translation regulator cbp8 from Schizosaccharomyces pombe (strain 972 / ATCC 24843) (Fission yeast).